The primary structure comprises 121 residues: Acidic phospholipase A2 PLA-1 (121 aa).

Disulfide bonds link Cys26-Cys115, Cys28-Cys44, Cys43-Cys95, Cys49-Cys121, Cys50-Cys88, Cys57-Cys81, and Cys75-Cys86. 3 residues coordinate Ca(2+): Tyr27, Gly29, and Gly31. Residue His47 is part of the active site. Asp48 serves as a coordination point for Ca(2+). The active site involves Asp89.

This sequence belongs to the phospholipase A2 family. Group II subfamily. D49 sub-subfamily. It depends on Ca(2+) as a cofactor. As to expression, expressed by the venom gland.

It is found in the secreted. It catalyses the reaction a 1,2-diacyl-sn-glycero-3-phosphocholine + H2O = a 1-acyl-sn-glycero-3-phosphocholine + a fatty acid + H(+). PLA2 catalyzes the calcium-dependent hydrolysis of the 2-acyl groups in 3-sn-phosphoglycerides. This Eristicophis macmahoni (Leaf-nosed viper) protein is Acidic phospholipase A2 PLA-1.